The primary structure comprises 279 residues: Bifunctional protein FolD 1 (279 aa).

Residues 166 to 168 (GRS) and serine 191 contribute to the NADP(+) site.

Belongs to the tetrahydrofolate dehydrogenase/cyclohydrolase family. In terms of assembly, homodimer.

It catalyses the reaction (6R)-5,10-methylene-5,6,7,8-tetrahydrofolate + NADP(+) = (6R)-5,10-methenyltetrahydrofolate + NADPH. It carries out the reaction (6R)-5,10-methenyltetrahydrofolate + H2O = (6R)-10-formyltetrahydrofolate + H(+). It participates in one-carbon metabolism; tetrahydrofolate interconversion. Its function is as follows. Catalyzes the oxidation of 5,10-methylenetetrahydrofolate to 5,10-methenyltetrahydrofolate and then the hydrolysis of 5,10-methenyltetrahydrofolate to 10-formyltetrahydrofolate. This chain is Bifunctional protein FolD 1, found in Salinispora arenicola (strain CNS-205).